We begin with the raw amino-acid sequence, 161 residues long: Glycine cleavage system H protein 3 (161 aa).

One can recognise a Lipoyl-binding domain in the interval 40–122; it reads TVTLGLTDVG…YGDAWIVKIK (83 aa). The residue at position 81 (K81) is an N6-lipoyllysine.

Belongs to the GcvH family. In terms of assembly, the glycine cleavage system is composed of four proteins: P, T, L and H. The cofactor is (R)-lipoate.

In terms of biological role, the glycine cleavage system catalyzes the degradation of glycine. The H protein shuttles the methylamine group of glycine from the P protein to the T protein. The polypeptide is Glycine cleavage system H protein 3 (Aquifex aeolicus (strain VF5)).